The following is a 144-amino-acid chain: MPYYEHVFLARQDASAQQVEELTTQITGVIEGLGGKVTKTESWGVRSLTYRIQKNRKAHFVLLNIDGPATIVAEVERQERINEDIIRYLTVRVDELEEGPSAMMRKADRDRERDERGGPREGGFRSERGPRRPREEETTASVEE.

A disordered region spans residues 97–144 (EEGPSAMMRKADRDRERDERGGPREGGFRSERGPRRPREEETTASVEE). Over residues 105 to 137 (RKADRDRERDERGGPREGGFRSERGPRRPREEE) the composition is skewed to basic and acidic residues.

The protein belongs to the bacterial ribosomal protein bS6 family.

Binds together with bS18 to 16S ribosomal RNA. This is Small ribosomal subunit protein bS6 from Afipia carboxidovorans (strain ATCC 49405 / DSM 1227 / KCTC 32145 / OM5) (Oligotropha carboxidovorans).